Consider the following 338-residue polypeptide: 1-aminocyclopropane-1-carboxylate deaminase (338 aa).

Residue Lys51 is modified to N6-(pyridoxal phosphate)lysine. Ser78 acts as the Nucleophile in catalysis.

It belongs to the ACC deaminase/D-cysteine desulfhydrase family. As to quaternary structure, homotrimer. Pyridoxal 5'-phosphate serves as cofactor.

The enzyme catalyses 1-aminocyclopropane-1-carboxylate + H2O = 2-oxobutanoate + NH4(+). In terms of biological role, catalyzes a cyclopropane ring-opening reaction, the irreversible conversion of 1-aminocyclopropane-1-carboxylate (ACC) to ammonia and alpha-ketobutyrate. Allows growth on ACC as a nitrogen source. The chain is 1-aminocyclopropane-1-carboxylate deaminase from Pseudomonas fluorescens.